A 235-amino-acid chain; its full sequence is 6-phosphogluconolactonase (235 aa).

Belongs to the glucosamine/galactosamine-6-phosphate isomerase family. 6-phosphogluconolactonase subfamily.

It catalyses the reaction 6-phospho-D-glucono-1,5-lactone + H2O = 6-phospho-D-gluconate + H(+). It participates in carbohydrate degradation; pentose phosphate pathway; D-ribulose 5-phosphate from D-glucose 6-phosphate (oxidative stage): step 2/3. Hydrolysis of 6-phosphogluconolactone to 6-phosphogluconate. In Borreliella burgdorferi (strain ATCC 35210 / DSM 4680 / CIP 102532 / B31) (Borrelia burgdorferi), this protein is 6-phosphogluconolactonase (pgl).